Consider the following 431-residue polypeptide: Forkhead box protein P3 (431 aa).

A disordered region spans residues 1 to 68 (MPNPRPGKPS…SSLNPMPPSQ (68 aa)). Residues 10–25 (SAPSLALGPSPGASPS) show a composition bias toward low complexity. Residue S19 is modified to Phosphoserine; by CDK2. K31 carries the post-translational modification N6-acetyllysine. Positions 68–76 (QLQLPTLPL) match the Nuclear export signal motif. The LXXLL motif motif lies at 92-96 (LQALL). Residues 106–190 (LSTVDAHART…STLSAVPQSS (85 aa)) form an essential for transcriptional repressor activity and for interaction with KAT5 and HDAC7 region. The interval 106 to 198 (LSTVDAHART…SSYPLLANGV (93 aa)) is interaction with ZFP90. Residues 149 to 199 (LPPGINVASLEWVSREPALLCTFPNPSAPRKDSTLSAVPQSSYPLLANGVC) are interaction with IKZF4. The C2H2-type zinc-finger motif lies at 197–222 (GVCKWPGCEKVFEEPEDFLKHCQADH). Residues 239–248 (VQSLEQQLVL) carry the Nuclear export signal motif. The interval 239–260 (VQSLEQQLVLEKEKLSAMQAHL) is leucine-zipper. Glycyl lysine isopeptide (Lys-Gly) (interchain with G-Cter in ubiquitin) cross-links involve residues K250 and K252. N6-acetyllysine; alternate occurs at positions 263 and 268. Glycyl lysine isopeptide (Lys-Gly) (interchain with G-Cter in ubiquitin); alternate cross-links involve residues K263 and K268. Residues 278 to 336 (GSCCIVAAGSQGPVVPAWSGPREAPDSLFAVRRHLWGSHGNSTFPEFLHNMDYFKFHNM) form an interaction with RUNX1 region. A DNA-binding region (fork-head) is located at residues 337–423 (RPPFTYATLI…RKKRSQRPSR (87 aa)). K393 participates in a covalent cross-link: Glycyl lysine isopeptide (Lys-Gly) (interchain with G-Cter in ubiquitin). Positions 414-417 (RKKR) match the Nuclear localization signal motif. Position 418 is a phosphoserine (S418). The propeptide occupies 418 to 431 (SQRPSRCSNPTPGP).

Homodimer. Dimerization is essential for its transcriptional regulator activity. Interacts with IKZF3. Isoform 1 (via LXXLL motif), but not isoform 2, interacts with isoform 4 of RORA (via AF-2 motif). Interacts with STUB1, HSPA8 and HSPA1A/B. Interacts with PPP1CA, PPP1CB and PPP1CG. Interacts with KAT5 and HDAC7. Interacts with HDAC9 in the absence of T-cell stimulation. Interacts with USP7. Interacts with isoform 2 of ZFP90 and can form a complex with TRIM28 in the presence of isoform 2 of ZFP90. Interacts with RUNX1. Interacts with RORC. Interacts with RELA and NFATC2. Interacts with RUNX2, RUNX3 and IKZF4. Polyubiquitinated, leading to its proteasomal degradation in regulatory T-cells (Treg) which is mediated by STUB1 in a HSPA1A/B-dependent manner. Deubiquitinated by USP7 and USP44; leading to increase in protein stability. In terms of processing, phosphorylation at Ser-418 regulates its transcriptional repressor activity and consequently, regulatory T-cells (Treg) suppressive function. Dephosphorylated at Ser-418 by protein phosphatase 1 (PP1) in Treg cells derived from patients with rheumatoid arthritis. Phosphorylation by CDK2 negatively regulates its transcriptional activity and protein stability. Post-translationally, acetylation on lysine residues stabilizes FOXP3 and promotes differentiation of T-cells into induced regulatory T-cells (iTregs) associated with suppressive functions. Acetylation is mediated by a coordinated action of KAT5 and EP300/p300 acetyltransferases: EP300/p300 is required to enhance KAT5 autoacetylation, promoting acetylation of FOXP3 by KAT5. Deacetylated by SIRT1. Undergoes proteolytic cleavage in activated regulatory T-cells (Treg), and can be cleaved at either the N- or C-terminal site, or at both sites.

Its subcellular location is the nucleus. It localises to the cytoplasm. Its function is as follows. Transcriptional regulator which is crucial for the development and inhibitory function of regulatory T-cells (Treg). Plays an essential role in maintaining homeostasis of the immune system by allowing the acquisition of full suppressive function and stability of the Treg lineage, and by directly modulating the expansion and function of conventional T-cells. Can act either as a transcriptional repressor or a transcriptional activator depending on its interactions with other transcription factors, histone acetylases and deacetylases. The suppressive activity of Treg involves the coordinate activation of many genes, including CTLA4 and TNFRSF18 by FOXP3 along with repression of genes encoding cytokines such as interleukin-2 (IL2) and interferon-gamma (IFNG). Inhibits cytokine production and T-cell effector function by repressing the activity of two key transcription factors, RELA and NFATC2. Mediates transcriptional repression of IL2 via its association with histone acetylase KAT5 and histone deacetylase HDAC7. Can activate the expression of TNFRSF18, IL2RA and CTLA4 and repress the expression of IL2 and IFNG via its association with transcription factor RUNX1. Inhibits the differentiation of IL17 producing helper T-cells (Th17) by antagonizing RORC function, leading to down-regulation of IL17 expression, favoring Treg development. Inhibits the transcriptional activator activity of RORA. Can repress the expression of IL2 and IFNG via its association with transcription factor IKZF4. The polypeptide is Forkhead box protein P3 (FOXP3) (Homo sapiens (Human)).